We begin with the raw amino-acid sequence, 597 residues long: Elongation factor 4 (597 aa).

Residues 2-184 (KNIRNFSIIA…EVVNKIPPPK (183 aa)) form the tr-type G domain. GTP is bound by residues 14-19 (DHGKST) and 131-134 (NKID).

It belongs to the TRAFAC class translation factor GTPase superfamily. Classic translation factor GTPase family. LepA subfamily.

Its subcellular location is the cell inner membrane. The catalysed reaction is GTP + H2O = GDP + phosphate + H(+). In terms of biological role, required for accurate and efficient protein synthesis under certain stress conditions. May act as a fidelity factor of the translation reaction, by catalyzing a one-codon backward translocation of tRNAs on improperly translocated ribosomes. Back-translocation proceeds from a post-translocation (POST) complex to a pre-translocation (PRE) complex, thus giving elongation factor G a second chance to translocate the tRNAs correctly. Binds to ribosomes in a GTP-dependent manner. This is Elongation factor 4 from Chromobacterium violaceum (strain ATCC 12472 / DSM 30191 / JCM 1249 / CCUG 213 / NBRC 12614 / NCIMB 9131 / NCTC 9757 / MK).